The chain runs to 118 residues: Small ribosomal subunit protein uS13 (118 aa).

The tract at residues 93–118 (RNLPVRGQRSKTNARTRKGPRKPIKR) is disordered.

This sequence belongs to the universal ribosomal protein uS13 family. Part of the 30S ribosomal subunit. Forms a loose heterodimer with protein S19. Forms two bridges to the 50S subunit in the 70S ribosome.

In terms of biological role, located at the top of the head of the 30S subunit, it contacts several helices of the 16S rRNA. In the 70S ribosome it contacts the 23S rRNA (bridge B1a) and protein L5 of the 50S subunit (bridge B1b), connecting the 2 subunits; these bridges are implicated in subunit movement. Contacts the tRNAs in the A and P-sites. This is Small ribosomal subunit protein uS13 from Saccharophagus degradans (strain 2-40 / ATCC 43961 / DSM 17024).